The sequence spans 246 residues: Triosephosphate isomerase (246 aa).

Asn-9 to Lys-11 contributes to the substrate binding site. The Electrophile role is filled by His-95. Glu-165 (proton acceptor) is an active-site residue. Substrate contacts are provided by residues Gly-171, Ser-210, and Gly-231–Gly-232.

This sequence belongs to the triosephosphate isomerase family. In terms of assembly, homodimer.

Its subcellular location is the cytoplasm. It catalyses the reaction D-glyceraldehyde 3-phosphate = dihydroxyacetone phosphate. Its pathway is carbohydrate biosynthesis; gluconeogenesis. It functions in the pathway carbohydrate degradation; glycolysis; D-glyceraldehyde 3-phosphate from glycerone phosphate: step 1/1. Functionally, involved in the gluconeogenesis. Catalyzes stereospecifically the conversion of dihydroxyacetone phosphate (DHAP) to D-glyceraldehyde-3-phosphate (G3P). This is Triosephosphate isomerase from Thermodesulfovibrio yellowstonii (strain ATCC 51303 / DSM 11347 / YP87).